The primary structure comprises 132 residues: uncharacterized protein (132 aa).

The 71-residue stretch at 45 to 115 (VHMEKHKLKI…VVIVTTAEGK (71 aa)) folds into the BIG2 domain.

To B.anthracis BA1245.

This is an uncharacterized protein from Bacillus cereus (strain ATCC 14579 / DSM 31 / CCUG 7414 / JCM 2152 / NBRC 15305 / NCIMB 9373 / NCTC 2599 / NRRL B-3711).